The primary structure comprises 302 residues: DNA-directed RNA polymerase II subunit rpb3 (302 aa).

Belongs to the archaeal Rpo3/eukaryotic RPB3 RNA polymerase subunit family. As to quaternary structure, component of the RNA polymerase II (Pol II) complex consisting of 12 subunits.

It localises to the nucleus. In terms of biological role, DNA-dependent RNA polymerase catalyzes the transcription of DNA into RNA using the four ribonucleoside triphosphates as substrates. Component of RNA polymerase II which synthesizes mRNA precursors and many functional non-coding RNAs. Pol II is the central component of the basal RNA polymerase II transcription machinery. It is composed of mobile elements that move relative to each other. Rpb3 is part of the core element with the central large cleft and the clamp element that moves to open and close the cleft. The polypeptide is DNA-directed RNA polymerase II subunit rpb3 (polr2c) (Dictyostelium discoideum (Social amoeba)).